The chain runs to 418 residues: Probable mitochondrial adenine nucleotide transporter BTL2 (418 aa).

3 Solcar repeats span residues Met-122–Gln-205, Ala-215–Ser-300, and Leu-329–Val-414. 6 consecutive transmembrane segments (helical) span residues His-127 to Arg-147, Gly-180 to Asp-200, Phe-221 to Ile-241, Leu-276 to Ile-296, Leu-335 to Val-355, and Ile-383 to Ile-403.

The protein belongs to the mitochondrial carrier (TC 2.A.29) family.

The protein resides in the mitochondrion inner membrane. Its function is as follows. Probable mitochondrial adenylate carrier that catalyzes the transport of ATP, ADP and AMP. This chain is Probable mitochondrial adenine nucleotide transporter BTL2, found in Arabidopsis thaliana (Mouse-ear cress).